Consider the following 324-residue polypeptide: Galectin-4 (324 aa).

2 Galectin domains span residues 19–150 and 196–324; these read YKRP…INFL and YVGT…YVQI. Position 257–263 (257–263) interacts with a beta-D-galactoside; it reads WGSEERK. At S259 the chain carries Phosphoserine.

In terms of assembly, monomer. Highly expressed in full-length form in small and large intestine and stomach but was not detected in other tissues including lung, liver, kidney and spleen.

Its function is as follows. Galectin that binds lactose and a related range of sugars. This Rattus norvegicus (Rat) protein is Galectin-4 (Lgals4).